The following is a 149-amino-acid chain: FAD synthase (149 aa).

ATP-binding positions include V15 to F16, H20 to H23, and D101.

The protein belongs to the archaeal FAD synthase family. As to quaternary structure, homodimer. It depends on a divalent metal cation as a cofactor.

It carries out the reaction FMN + ATP + H(+) = FAD + diphosphate. The protein operates within cofactor biosynthesis; FAD biosynthesis; FAD from FMN: step 1/1. Functionally, catalyzes the transfer of the AMP portion of ATP to flavin mononucleotide (FMN) to produce flavin adenine dinucleotide (FAD) coenzyme. The polypeptide is FAD synthase (Thermococcus kodakarensis (strain ATCC BAA-918 / JCM 12380 / KOD1) (Pyrococcus kodakaraensis (strain KOD1))).